Consider the following 957-residue polypeptide: Glycine dehydrogenase (decarboxylating) 2 (957 aa).

Lys-707 carries the N6-(pyridoxal phosphate)lysine modification.

Belongs to the GcvP family. As to quaternary structure, the glycine cleavage system is composed of four proteins: P, T, L and H. Requires pyridoxal 5'-phosphate as cofactor.

It carries out the reaction N(6)-[(R)-lipoyl]-L-lysyl-[glycine-cleavage complex H protein] + glycine + H(+) = N(6)-[(R)-S(8)-aminomethyldihydrolipoyl]-L-lysyl-[glycine-cleavage complex H protein] + CO2. In terms of biological role, the glycine cleavage system catalyzes the degradation of glycine. The P protein binds the alpha-amino group of glycine through its pyridoxal phosphate cofactor; CO(2) is released and the remaining methylamine moiety is then transferred to the lipoamide cofactor of the H protein. This is Glycine dehydrogenase (decarboxylating) 2 from Pseudomonas fluorescens (strain ATCC BAA-477 / NRRL B-23932 / Pf-5).